We begin with the raw amino-acid sequence, 435 residues long: Serine--tRNA ligase (435 aa).

241 to 243 contacts L-serine; that stretch reads TAE. Position 272–274 (272–274) interacts with ATP; it reads RSE. L-serine is bound at residue Glu-295. 359–362 contacts ATP; it reads EISS. An L-serine-binding site is contributed by Ser-395.

This sequence belongs to the class-II aminoacyl-tRNA synthetase family. Type-1 seryl-tRNA synthetase subfamily. In terms of assembly, homodimer. The tRNA molecule binds across the dimer.

The protein resides in the cytoplasm. The enzyme catalyses tRNA(Ser) + L-serine + ATP = L-seryl-tRNA(Ser) + AMP + diphosphate + H(+). It catalyses the reaction tRNA(Sec) + L-serine + ATP = L-seryl-tRNA(Sec) + AMP + diphosphate + H(+). The protein operates within aminoacyl-tRNA biosynthesis; selenocysteinyl-tRNA(Sec) biosynthesis; L-seryl-tRNA(Sec) from L-serine and tRNA(Sec): step 1/1. In terms of biological role, catalyzes the attachment of serine to tRNA(Ser). Is also able to aminoacylate tRNA(Sec) with serine, to form the misacylated tRNA L-seryl-tRNA(Sec), which will be further converted into selenocysteinyl-tRNA(Sec). The polypeptide is Serine--tRNA ligase (Actinobacillus pleuropneumoniae serotype 5b (strain L20)).